A 387-amino-acid polypeptide reads, in one-letter code: Succinyl-diaminopimelate desuccinylase (387 aa).

Histidine 75 contributes to the Zn(2+) binding site. The active site involves aspartate 77. Aspartate 108 serves as a coordination point for Zn(2+). Glutamate 139 (proton acceptor) is an active-site residue. Residues glutamate 140, glutamate 168, and histidine 357 each contribute to the Zn(2+) site.

This sequence belongs to the peptidase M20A family. DapE subfamily. In terms of assembly, homodimer. Requires Zn(2+) as cofactor. It depends on Co(2+) as a cofactor.

The catalysed reaction is N-succinyl-(2S,6S)-2,6-diaminopimelate + H2O = (2S,6S)-2,6-diaminopimelate + succinate. It participates in amino-acid biosynthesis; L-lysine biosynthesis via DAP pathway; LL-2,6-diaminopimelate from (S)-tetrahydrodipicolinate (succinylase route): step 3/3. In terms of biological role, catalyzes the hydrolysis of N-succinyl-L,L-diaminopimelic acid (SDAP), forming succinate and LL-2,6-diaminopimelate (DAP), an intermediate involved in the bacterial biosynthesis of lysine and meso-diaminopimelic acid, an essential component of bacterial cell walls. This is Succinyl-diaminopimelate desuccinylase from Caulobacter sp. (strain K31).